We begin with the raw amino-acid sequence, 490 residues long: Tektin-3 (490 aa).

Residues Thr7 and Thr9 are each glycosylated (O-linked (GalNAc...) threonine). Residues Asn41, Asn86, Asn111, and Asn276 are each glycosylated (N-linked (GlcNAc...) asparagine). A coiled-coil region spans residues 419–456 (RLVNEVYEVDETIQTLQQRLRDSEDTLQSLAHTKATLE).

This sequence belongs to the tektin family. As to quaternary structure, microtubule inner protein component of sperm flagellar doublet microtubules. Interacts with TEKT1, TEKT2, TEKT4 and TEKT5. Interacts with CCDC38. Post-translationally, N- and O-glycosylated. In terms of processing, may be proteolytically processed during the epididymal transit of spermatozoa. Ubiquitinated, leading to its degradation. Deubiquitinated by USP16, promoting its stability. As to expression, expressed in epididymal sperm (at protein level).

Its subcellular location is the cytoplasm. It is found in the cytoskeleton. The protein resides in the cilium axoneme. The protein localises to the flagellum axoneme. It localises to the cytoplasmic vesicle. Its subcellular location is the secretory vesicle. It is found in the acrosome outer membrane. Its function is as follows. Microtubule inner protein (MIP) part of the dynein-decorated doublet microtubules (DMTs) in cilia and flagellar axoneme. Forms filamentous polymers in the walls of ciliary and flagellar microtubules. Required for normal sperm mobility. This is Tektin-3 (Tekt3) from Rattus norvegicus (Rat).